The sequence spans 360 residues: tRNA-specific 2-thiouridylase MnmA (360 aa).

Residues 8 to 15 and Met34 contribute to the ATP site; that span reads GMSGGVDS. The interaction with target base in tRNA stretch occupies residues 94-96; it reads NPD. Catalysis depends on Cys99, which acts as the Nucleophile. A disulfide bridge connects residues Cys99 and Cys195. Gly123 is an ATP binding site. The interaction with tRNA stretch occupies residues 145 to 147; sequence KDQ. Cys195 serves as the catalytic Cysteine persulfide intermediate. Positions 307–308 are interaction with tRNA; it reads RY.

The protein belongs to the MnmA/TRMU family.

The protein resides in the cytoplasm. It catalyses the reaction S-sulfanyl-L-cysteinyl-[protein] + uridine(34) in tRNA + AH2 + ATP = 2-thiouridine(34) in tRNA + L-cysteinyl-[protein] + A + AMP + diphosphate + H(+). Its function is as follows. Catalyzes the 2-thiolation of uridine at the wobble position (U34) of tRNA, leading to the formation of s(2)U34. In Methylobacillus flagellatus (strain ATCC 51484 / DSM 6875 / VKM B-1610 / KT), this protein is tRNA-specific 2-thiouridylase MnmA.